Here is a 568-residue protein sequence, read N- to C-terminus: MTLRLSRRAYAEMFGPTTGDRVRLADTELLIEIERDFTTYGEEVKFGGGKVIRDGMGQSQRVAADVPDTVITNAVILDHWGIVKADIAIKHGRIAAIGKAGNPDIQPGVTIAIGAATEVIAGEGLIVTAGGIDTHIHFISPQQIDEALASGVTTMLGGGTGPATGTNATTCTPGPWHMERMLQAADGWPINLGFLGKGNASLPQPLVEQIAAGAIGLKLHEDWGTTPAAIDNCLSVADDTDTQVAIHTDTLNEAGFVESTVAAFKGRTIHTYHTEGAGGGHAPDILKVCGEMNVLPSSTNPTRPYTINTLDEHLDMLMVCHHLDPSIAEDLAFAESRIRRETIAAEDILHDLGALSMLSSDSQAMGRVGEVIIRTWQTAHKMKVQRGALPEDTARNDNFRAKRYVAKYTINPALTHGIAHEVGSIEPGKWADLVLWEPAFFGIKPSMILKGGMIALAQMGDPNASIPTPQPVHYREMFATRGGALARTSLTFVSQMAADAGIAERYGLAKRIVPVRNCRNVTKADMIHNAWRPSISVDPETYDVIADGQLLTCEPATVLPMAQRYFLF.

The 439-residue stretch at 130 to 568 (GGIDTHIHFI…LPMAQRYFLF (439 aa)) folds into the Urease domain. Ni(2+) is bound by residues His135, His137, and Lys218. The residue at position 218 (Lys218) is an N6-carboxylysine. His220 serves as a coordination point for substrate. Ni(2+) contacts are provided by His247 and His273. His321 functions as the Proton donor in the catalytic mechanism. Ni(2+) is bound at residue Asp361.

The protein belongs to the metallo-dependent hydrolases superfamily. Urease alpha subunit family. In terms of assembly, heterotrimer of UreA (gamma), UreB (beta) and UreC (alpha) subunits. Three heterotrimers associate to form the active enzyme. Requires Ni cation as cofactor. Carboxylation allows a single lysine to coordinate two nickel ions.

The protein resides in the cytoplasm. It carries out the reaction urea + 2 H2O + H(+) = hydrogencarbonate + 2 NH4(+). It participates in nitrogen metabolism; urea degradation; CO(2) and NH(3) from urea (urease route): step 1/1. The sequence is that of Urease subunit alpha from Burkholderia cenocepacia (strain ATCC BAA-245 / DSM 16553 / LMG 16656 / NCTC 13227 / J2315 / CF5610) (Burkholderia cepacia (strain J2315)).